A 404-amino-acid chain; its full sequence is Phosphopentomutase (404 aa).

Mn(2+)-binding residues include Asp10, Asp303, His308, Asp344, His345, and His356.

Belongs to the phosphopentomutase family. Mn(2+) serves as cofactor.

It localises to the cytoplasm. The catalysed reaction is 2-deoxy-alpha-D-ribose 1-phosphate = 2-deoxy-D-ribose 5-phosphate. The enzyme catalyses alpha-D-ribose 1-phosphate = D-ribose 5-phosphate. It functions in the pathway carbohydrate degradation; 2-deoxy-D-ribose 1-phosphate degradation; D-glyceraldehyde 3-phosphate and acetaldehyde from 2-deoxy-alpha-D-ribose 1-phosphate: step 1/2. Isomerase that catalyzes the conversion of deoxy-ribose 1-phosphate (dRib-1-P) and ribose 1-phosphate (Rib-1-P) to deoxy-ribose 5-phosphate (dRib-5-P) and ribose 5-phosphate (Rib-5-P), respectively. The chain is Phosphopentomutase from Shewanella baltica (strain OS223).